The following is a 457-amino-acid chain: Multidrug resistance protein MdtK (457 aa).

Transmembrane regions (helical) follow at residues 11 to 31 (LLAL…MGVV), 46 to 66 (AVAV…GLLL), 93 to 113 (WLAF…DHII), 127 to 147 (AVGF…FQVL), 160 to 180 (GMVI…IFIY), 188 to 208 (LGGV…FLMM), 243 to 263 (LPVA…ALLV), 278 to 300 (LNFS…IRVG), 316 to 336 (YTSI…TVVF), 350 to 370 (VVVM…SDAI), 387 to 407 (IFFI…YLLG), and 418 to 438 (PSGF…LMAL).

It belongs to the multi antimicrobial extrusion (MATE) (TC 2.A.66.1) family. MdtK subfamily.

Its subcellular location is the cell inner membrane. Its function is as follows. Multidrug efflux pump that functions probably as a Na(+)/drug antiporter. The protein is Multidrug resistance protein MdtK of Yersinia enterocolitica serotype O:8 / biotype 1B (strain NCTC 13174 / 8081).